We begin with the raw amino-acid sequence, 403 residues long: Exodeoxyribonuclease 7 large subunit (403 aa).

The protein belongs to the XseA family. In terms of assembly, heterooligomer composed of large and small subunits.

The protein localises to the cytoplasm. It catalyses the reaction Exonucleolytic cleavage in either 5'- to 3'- or 3'- to 5'-direction to yield nucleoside 5'-phosphates.. Functionally, bidirectionally degrades single-stranded DNA into large acid-insoluble oligonucleotides, which are then degraded further into small acid-soluble oligonucleotides. The polypeptide is Exodeoxyribonuclease 7 large subunit (Clostridium botulinum (strain Okra / Type B1)).